We begin with the raw amino-acid sequence, 166 residues long: Alanine racemase (166 aa).

Catalysis depends on Tyr62, which acts as the Proton acceptor; specific for L-alanine. Residue Met110 participates in substrate binding.

Belongs to the alanine racemase family. The cofactor is pyridoxal 5'-phosphate.

It catalyses the reaction L-alanine = D-alanine. It participates in amino-acid biosynthesis; D-alanine biosynthesis; D-alanine from L-alanine: step 1/1. Its function is as follows. Catalyzes the interconversion of L-alanine and D-alanine. May also act on other amino acids. The protein is Alanine racemase (alr) of Piscirickettsia salmonis.